We begin with the raw amino-acid sequence, 216 residues long: Orotate phosphoribosyltransferase (216 aa).

Residue K30 participates in 5-phospho-alpha-D-ribose 1-diphosphate binding. Residue 38–39 (FF) participates in orotate binding. 5-phospho-alpha-D-ribose 1-diphosphate contacts are provided by residues 75 to 76 (YK), R102, K103, K106, H108, and 128 to 136 (DDVITAGTA). Orotate contacts are provided by T132 and R160.

It belongs to the purine/pyrimidine phosphoribosyltransferase family. PyrE subfamily. As to quaternary structure, homodimer. Requires Mg(2+) as cofactor.

The catalysed reaction is orotidine 5'-phosphate + diphosphate = orotate + 5-phospho-alpha-D-ribose 1-diphosphate. It participates in pyrimidine metabolism; UMP biosynthesis via de novo pathway; UMP from orotate: step 1/2. Functionally, catalyzes the transfer of a ribosyl phosphate group from 5-phosphoribose 1-diphosphate to orotate, leading to the formation of orotidine monophosphate (OMP). This chain is Orotate phosphoribosyltransferase, found in Acinetobacter baylyi (strain ATCC 33305 / BD413 / ADP1).